The chain runs to 175 residues: Putative metal-dependent hydrolase BPUM_0784 (175 aa).

Residues H65, H157, and H161 each coordinate Zn(2+).

This sequence belongs to the metal hydrolase YfiT family. In terms of assembly, homodimer. Requires Zn(2+) as cofactor.

The protein localises to the cytoplasm. Possible metal-dependent hydrolase. The sequence is that of Putative metal-dependent hydrolase BPUM_0784 from Bacillus pumilus (strain SAFR-032).